Consider the following 567-residue polypeptide: MENKSQKKVSDLKLITLWIIVIFGYLLFVVEWFVIDRISGKPTGILTQSTTTLPQYSGWLSSFFTENAGQIATSSTNWTITLLRAVGSILCGVVVLKFGYRYAVLIMMGIMCVCFPFLIIGDPLNGHNQLTLLRPLSDSVKTQLSSLSSNLQVGQLLGPVMINGKTMLADGTSVELIKGLDGNSIGTAASITGYALFIIFRSTIAIGGTTLVVYTQPAIANLSSNRKKSILSNANLWGFNIGIAVVFTPFLFEQVQQVASQYWVYIMTVMILVVFANLCLFLWFESKIDHIFPQKQTKENMSLTTQPKSIDILKNKTTWKLIGVYGIVLILIVNPLTPAWFSILQTVSPSGSNGLISTGVYTTGLATLAIFWVIGYALGFVVFSPFNKTIYDKKRWMHFLLTANIVVLLIIIMFAATLGIGSAAGFALISIFSFIGGAFAWSLSSSNLILPYEFKDYKKNELPILFGFCWGFGYIAYTLFDITQSVFLQAPVLIQGKGTSILPGVIVSIVFFLGLIALANLIVKFFPACWIKDGDQLVQEMTRKWKLNEWQFVIANKQKNRYSELLK.

12 helical membrane-spanning segments follow: residues 15–35, 78–98, 104–124, 193–213, 230–250, 264–284, 321–341, 363–383, 405–425, 426–446, 462–482, and 503–523; these read ITLW…WFVI, WTIT…VLKF, VLIM…GDPL, GYAL…TLVV, ILSN…FTPF, VYIM…FLWF, LIGV…PAWF, TGLA…FVVF, IVVL…SAAG, FALI…LSSS, LPIL…LFDI, and PGVI…NLIV.

It belongs to the major facilitator superfamily.

The protein resides in the cell membrane. The sequence is that of Major facilitator superfamily transporter MG061 from Mycoplasma genitalium (strain ATCC 33530 / DSM 19775 / NCTC 10195 / G37) (Mycoplasmoides genitalium).